A 149-amino-acid polypeptide reads, in one-letter code: Lipoprotein signal peptidase (149 aa).

Transmembrane regions (helical) follow at residues 58–78 and 85–105; these read WFFI…LIRL and ASLA…DRAM. Active-site residues include Asp111 and Asp127. Residues 122–142 traverse the membrane as a helical segment; sequence IFNVADMAITIGVGILLLDVF.

This sequence belongs to the peptidase A8 family.

The protein localises to the cell membrane. It catalyses the reaction Release of signal peptides from bacterial membrane prolipoproteins. Hydrolyzes -Xaa-Yaa-Zaa-|-(S,diacylglyceryl)Cys-, in which Xaa is hydrophobic (preferably Leu), and Yaa (Ala or Ser) and Zaa (Gly or Ala) have small, neutral side chains.. Its pathway is protein modification; lipoprotein biosynthesis (signal peptide cleavage). In terms of biological role, this protein specifically catalyzes the removal of signal peptides from prolipoproteins. The chain is Lipoprotein signal peptidase from Brevibacillus brevis (strain 47 / JCM 6285 / NBRC 100599).